The sequence spans 88 residues: Small ribosomal subunit protein bS18 (88 aa).

The tract at residues 1-26 (MAFAQSGGAGGGGGQRRPFFRRRKTC) is disordered.

Belongs to the bacterial ribosomal protein bS18 family. As to quaternary structure, part of the 30S ribosomal subunit. Forms a tight heterodimer with protein bS6.

In terms of biological role, binds as a heterodimer with protein bS6 to the central domain of the 16S rRNA, where it helps stabilize the platform of the 30S subunit. The protein is Small ribosomal subunit protein bS18 of Xanthobacter autotrophicus (strain ATCC BAA-1158 / Py2).